The primary structure comprises 456 residues: Antigen Lp49 (456 aa).

The first 34 residues, 1–34 (MNSNPKKKFLKLIKIKSDIILLIPIFLFLVCCKS), serve as a signal peptide directing secretion. Cysteines 346 and 347 form a disulfide.

The protein resides in the cell outer membrane. May be involved in virulence. Binds human plasminogen (PLG) and stimulates its proteolytic cleavage to enzymatically active plasmin in the presence of an urokinase-type PLG activator in vitro. Activated plasmin has proteolytic activity which may help the bacteria to spread throughout the host by degrading extracellular matrix components, facilitating tissue penetration and invasion. This is Antigen Lp49 from Leptospira interrogans serogroup Icterohaemorrhagiae serovar copenhageni (strain Fiocruz L1-130).